The sequence spans 312 residues: Probable cell division protein WhiA (312 aa).

The H-T-H motif DNA-binding region spans 274 to 308 (SLKELGTLVPGGPISKSGVNHRLRKLNAYADELRQ).

The protein belongs to the WhiA family.

In terms of biological role, involved in cell division and chromosome segregation. The chain is Probable cell division protein WhiA from Limosilactobacillus fermentum (strain NBRC 3956 / LMG 18251) (Lactobacillus fermentum).